A 732-amino-acid chain; its full sequence is 1,4-alpha-glucan branching enzyme GlgB 1 (732 aa).

Residue D411 is the Nucleophile of the active site. E464 functions as the Proton donor in the catalytic mechanism.

This sequence belongs to the glycosyl hydrolase 13 family. GlgB subfamily. Monomer.

It catalyses the reaction Transfers a segment of a (1-&gt;4)-alpha-D-glucan chain to a primary hydroxy group in a similar glucan chain.. The protein operates within glycan biosynthesis; glycogen biosynthesis. Functionally, catalyzes the formation of the alpha-1,6-glucosidic linkages in glycogen by scission of a 1,4-alpha-linked oligosaccharide from growing alpha-1,4-glucan chains and the subsequent attachment of the oligosaccharide to the alpha-1,6 position. The chain is 1,4-alpha-glucan branching enzyme GlgB 1 from Xanthomonas oryzae pv. oryzae (strain KACC10331 / KXO85).